Reading from the N-terminus, the 553-residue chain is Efflux pump mlcE (553 aa).

Over residues 1–19 (MSEPLPPKEGEPRPQKEES) the composition is skewed to basic and acidic residues. Positions 1-29 (MSEPLPPKEGEPRPQKEESQNDTLEATES) are disordered. The N-linked (GlcNAc...) asparagine glycan is linked to Asn-21. 13 helical membrane passes run 41-61 (LVVA…SIIV), 77-96 (VGWY…PLAG), 101-121 (LLGL…GSVL), 136-156 (AVAG…LSTA), 164-184 (VLIG…PLLG), 196-216 (CFYI…VITI), 245-265 (LVGF…LEWG), 273-293 (SSVI…FVLW), 319-339 (LFMG…PIYF), 352-372 (VYML…GFAI), 376-396 (GYYL…AGLV), 440-460 (ALGI…FLDF), and 516-536 (TFYL…GMGW). Residue Asn-543 is glycosylated (N-linked (GlcNAc...) asparagine).

The protein belongs to the major facilitator superfamily. TCR/Tet family.

It is found in the membrane. Functionally, efflux pump; part of the gene cluster that mediates the biosynthesis of compactin, also known as mevastatin or ML-236B, and which acts as a potent competitive inhibitor of HMG-CoA reductase. The polypeptide is Efflux pump mlcE (Penicillium citrinum).